The following is a 447-amino-acid chain: ATP-dependent protease ATPase subunit HslU (447 aa).

Residues isoleucine 17, 59–64, aspartate 256, glutamate 321, and arginine 393 contribute to the ATP site; that span reads GVGKTE.

The protein belongs to the ClpX chaperone family. HslU subfamily. A double ring-shaped homohexamer of HslV is capped on each side by a ring-shaped HslU homohexamer. The assembly of the HslU/HslV complex is dependent on binding of ATP.

The protein resides in the cytoplasm. In terms of biological role, ATPase subunit of a proteasome-like degradation complex; this subunit has chaperone activity. The binding of ATP and its subsequent hydrolysis by HslU are essential for unfolding of protein substrates subsequently hydrolyzed by HslV. HslU recognizes the N-terminal part of its protein substrates and unfolds these before they are guided to HslV for hydrolysis. The protein is ATP-dependent protease ATPase subunit HslU of Pseudomonas putida (strain ATCC 47054 / DSM 6125 / CFBP 8728 / NCIMB 11950 / KT2440).